An 894-amino-acid polypeptide reads, in one-letter code: Translation factor GUF1 homolog, mitochondrial (894 aa).

The interval 157–189 (EDEGLDGGPPPGMEAKKSSSSSSSNNVHSNCSD) is disordered. The span at 174-188 (SSSSSSSNNVHSNCS) shows a compositional bias: low complexity. The tr-type G domain maps to 199 to 376 (ENIRNFCILA…RIVSEIPSPA (178 aa)). GTP contacts are provided by residues 208–215 (AHIDSGKS), 269–273 (DTPGH), and 323–326 (NKID). Positions 649-674 (DHDDCNDNGGSNSDDRSDRSGKNPPD) are disordered.

The protein belongs to the TRAFAC class translation factor GTPase superfamily. Classic translation factor GTPase family. LepA subfamily.

The protein localises to the mitochondrion inner membrane. It catalyses the reaction GTP + H2O = GDP + phosphate + H(+). Its function is as follows. Promotes mitochondrial protein synthesis. May act as a fidelity factor of the translation reaction, by catalyzing a one-codon backward translocation of tRNAs on improperly translocated ribosomes. Binds to mitochondrial ribosomes in a GTP-dependent manner. The chain is Translation factor GUF1 homolog, mitochondrial from Plasmodium knowlesi (strain H).